The sequence spans 114 residues: Transmembrane protein 14DP (114 aa).

Helical transmembrane passes span Leu8–Val28, Ala36–Leu56, Val63–Met80, and Tyr83–Ala103.

Belongs to the TMEM14 family.

It localises to the membrane. This is Transmembrane protein 14DP (TMEM14DP) from Homo sapiens (Human).